The following is a 75-amino-acid chain: MTVIRLTRIGRKKKPFYRVVVTDSRKRRDGGWIESIGYYNPLEPKDIKIDKERLNYWKGVGAKMSERVEKLSQKA.

It belongs to the bacterial ribosomal protein bS16 family.

In Helicobacter pylori (strain G27), this protein is Small ribosomal subunit protein bS16.